Reading from the N-terminus, the 671-residue chain is MESIEQQLTELRTTLRHHEYLYHVMDAPEIPDAEYDRLMRELRELETKHPELITPDSPTQRVGAAPLAAFSQIRHEVPMLSLDNVFDEESFLAFNKRVQDRLKNNEKVTWCCELKLDGLAVSILYENGVLVSAATRGDGTTGEDITSNVRTIRAIPLKLHGENIPARLEVRGEVFLPQAGFEKINEDARRTGGKVFANPRNAAAGSLRQLDPRITAKRPLTFFCYGVGVLEGGELPDTHLGRLLQFKKWGLPVSDRVTLCESAEEVLAFYHKVEEDRPTLGFDIDGVVIKVNSLEQQEQLGFVARAPRWAVAFKFPAQEQMTFVRDVEFQVGRTGAITPVARLEPVHVAGVLVSNATLHNADEIERLGLRIGDKVVIRRAGDVIPQVVNVVLSERPEDTREVVFPTHCPVCGSDVERVEGEAVARCTGGLICGAQRKESLKHFVSRRAMDVDGMGDKIIDQLVEKEYVHTPADLFKLTAGKLTGLERMGPKSAQNVVNALEKAKETTFARFLYALGIREVGEATAAGLAAYFGTLEALEAASIEELQKVPDVGIVVASHVHNFFAEESNRNVISELLAEGVHWPAPIVINAEEIDSPFAGKTVVLTGSLSQMSRDDAKARLVELGAKVAGSVSKKTDLVIAGEAAGSKLAKAQELGIEVIDEAEMLRLLGS.

NAD(+) is bound by residues 32 to 36 (DAEYD), 81 to 82 (SL), and Glu-113. Residue Lys-115 is the N6-AMP-lysine intermediate of the active site. Positions 136, 173, 290, and 314 each coordinate NAD(+). Zn(2+) contacts are provided by Cys-408, Cys-411, Cys-426, and Cys-432. Residues 593 to 671 (EIDSPFAGKT…EAEMLRLLGS (79 aa)) enclose the BRCT domain.

Belongs to the NAD-dependent DNA ligase family. LigA subfamily. Mg(2+) is required as a cofactor. The cofactor is Mn(2+).

It carries out the reaction NAD(+) + (deoxyribonucleotide)n-3'-hydroxyl + 5'-phospho-(deoxyribonucleotide)m = (deoxyribonucleotide)n+m + AMP + beta-nicotinamide D-nucleotide.. DNA ligase that catalyzes the formation of phosphodiester linkages between 5'-phosphoryl and 3'-hydroxyl groups in double-stranded DNA using NAD as a coenzyme and as the energy source for the reaction. It is essential for DNA replication and repair of damaged DNA. The polypeptide is DNA ligase (Escherichia coli (strain SE11)).